The primary structure comprises 323 residues: Beta-ketoacyl-[acyl-carrier-protein] synthase III (323 aa).

Catalysis depends on residues C112 and H250. Positions 251 to 255 (QANYR) are ACP-binding. The active site involves N280.

Belongs to the thiolase-like superfamily. FabH family. Homodimer.

The protein resides in the cytoplasm. It catalyses the reaction malonyl-[ACP] + acetyl-CoA + H(+) = 3-oxobutanoyl-[ACP] + CO2 + CoA. It participates in lipid metabolism; fatty acid biosynthesis. Catalyzes the condensation reaction of fatty acid synthesis by the addition to an acyl acceptor of two carbons from malonyl-ACP. Catalyzes the first condensation reaction which initiates fatty acid synthesis and may therefore play a role in governing the total rate of fatty acid production. Possesses both acetoacetyl-ACP synthase and acetyl transacylase activities. Its substrate specificity determines the biosynthesis of branched-chain and/or straight-chain of fatty acids. The polypeptide is Beta-ketoacyl-[acyl-carrier-protein] synthase III (Clostridium beijerinckii (strain ATCC 51743 / NCIMB 8052) (Clostridium acetobutylicum)).